A 514-amino-acid polypeptide reads, in one-letter code: MEISWGRAMWRNFLGQSPDWYKLALLVFLIVNPFIFLANPFIAGWLLVAEFIFTLAMALKCYPLLPGGLLAIEAVIIGMTSAAHVREEVAANLEVLLLLMFMVAGIYFMKQLLLFIFTRLLLSIRSKMVLSLAFCVAAAFLSAFLDALTVVAVVISVAVGFYGIYHRVASSRGEENDMLDDSHIDPHYKTVLEQFRGFLRSLMMHAGVGTALGGVMTMVGEPQNLIIAKAAGWHFGDFFLRMSPVTVPVLVCGLLTCMLVEKMRWFGYGETLPEKVRDVLQQFDDQSRKKRTRQDKIKLIVQAVIGVWLVTALALHLAEVGLIGLSVIILATALTGVTDEHAIGKAFTESLPFTALLTVFFSIVAVIIDQHLFAPIIQFVLQASEHAQLTLFYLFNGLLSSISDNVFVGTIYINEAKAAMENGAISLKQFELLTVAINTGTNLPSVATPNGQAAFLFLLTSALAPLIRLSYGRMVWMALPYTIVLTLIGLLCVEFTLAPATEWMTQAGWLATLS.

A run of 12 helical transmembrane segments spans residues 23–43 (LALL…PFIA), 63–83 (PLLP…TSAA), 97–117 (LLLM…LFIF), 120–140 (LLLS…AAAF), 144–164 (FLDA…FYGI), 202–222 (LMMH…VGEP), 238–258 (FFLR…LTCM), 303–323 (AVIG…VGLI), 357–377 (LTVF…APII), 391–411 (LFYL…VGTI), 447–467 (ATPN…APLI), and 475–495 (VWMA…CVEF).

This sequence belongs to the NhaB Na(+)/H(+) (TC 2.A.34) antiporter family.

It localises to the cell inner membrane. The enzyme catalyses 2 Na(+)(in) + 3 H(+)(out) = 2 Na(+)(out) + 3 H(+)(in). Its function is as follows. Na(+)/H(+) antiporter that extrudes sodium in exchange for external protons. The polypeptide is Na(+)/H(+) antiporter NhaB (Salmonella gallinarum (strain 287/91 / NCTC 13346)).